Consider the following 332-residue polypeptide: Leucine carboxyl methyltransferase 1 (332 aa).

S-adenosyl-L-methionine is bound by residues Arg-71, Gly-96, Asp-120, 169-170 (DL), and Glu-196.

Belongs to the methyltransferase superfamily. LCMT family.

It carries out the reaction [phosphatase 2A protein]-C-terminal L-leucine + S-adenosyl-L-methionine = [phosphatase 2A protein]-C-terminal L-leucine methyl ester + S-adenosyl-L-homocysteine. Its function is as follows. Methylates the carboxyl group of the C-terminal leucine residue of protein phosphatase 2A catalytic subunits to form alpha-leucine ester residues. This Rattus norvegicus (Rat) protein is Leucine carboxyl methyltransferase 1 (Lcmt1).